A 345-amino-acid chain; its full sequence is Platelet-derived growth factor C (345 aa).

A signal peptide spans 1 to 22; the sequence is MLLLGLLLLTSALAGQRTGTRA. A compositionally biased stretch (polar residues) spans 24–33; it reads SNLSSKLQLS. The segment at 24-45 is disordered; it reads SNLSSKLQLSSDKEQNGVQDPR. Asparagine 25 carries N-linked (GlcNAc...) asparagine glycosylation. The segment covering 34–45 has biased composition (basic and acidic residues); sequence SDKEQNGVQDPR. In terms of domain architecture, CUB spans 46–163; the sequence is HERVVTISGN…PGFCIHYSII (118 aa). Asparagine 55 is a glycosylation site (N-linked (GlcNAc...) asparagine). 4 disulfides stabilise this stretch: cysteine 104–cysteine 124, cysteine 250–cysteine 294, cysteine 280–cysteine 335, and cysteine 287–cysteine 337.

It belongs to the PDGF/VEGF growth factor family. Homodimer; disulfide-linked. Interacts with PDGFRA homodimers, and with heterodimers formed by PDGFRA and PDGFRB. Interacts (via CUB domain) with PLAT (via kringle domain). In terms of processing, proteolytic removal of the N-terminal CUB domain releasing the core domain is necessary for unmasking the receptor-binding epitopes of the core domain. Cleavage after basic residues in the hinge region (region connecting the CUB and growth factor domains) gives rise to the receptor-binding form. Cleaved by PLAT and PLG. Post-translationally, sumoylated by SUMO1. N-glycosylated. As to expression, mainly expressed in kidney, testis, liver, heart and brain (at protein level). Highly expressed in airway epithelium, interstitial cells and alveolar macrophages in the lung of mice overexpressing IL13. Expressed in the ovaries.

The protein resides in the cytoplasm. It is found in the cytosol. It localises to the secreted. The protein localises to the nucleus. Its subcellular location is the cytoplasmic granule. The protein resides in the cell membrane. Its function is as follows. Growth factor that plays an essential role in the regulation of embryonic development, cell proliferation, cell migration, survival and chemotaxis. Potent mitogen and chemoattractant for cells of mesenchymal origin. Required for normal skeleton formation during embryonic development, especially for normal development of the craniofacial skeleton and for normal development of the palate. Required for normal skin morphogenesis during embryonic development. Plays an important role in wound healing, where it appears to be involved in three stages: inflammation, proliferation and remodeling. Plays an important role in angiogenesis and blood vessel development. Involved in fibrotic processes, in which transformation of interstitial fibroblasts into myofibroblasts plus collagen deposition occurs. The CUB domain has mitogenic activity in coronary artery smooth muscle cells, suggesting a role beyond the maintenance of the latency of the PDGF domain. In the nucleus, PDGFC seems to have additional function. In Mus musculus (Mouse), this protein is Platelet-derived growth factor C (Pdgfc).